Consider the following 549-residue polypeptide: Glucose-6-phosphate isomerase (549 aa).

The Proton donor role is filled by E353. Residues H384 and K513 contribute to the active site.

Belongs to the GPI family.

It localises to the cytoplasm. The catalysed reaction is alpha-D-glucose 6-phosphate = beta-D-fructose 6-phosphate. It participates in carbohydrate biosynthesis; gluconeogenesis. Its pathway is carbohydrate degradation; glycolysis; D-glyceraldehyde 3-phosphate and glycerone phosphate from D-glucose: step 2/4. Its function is as follows. Catalyzes the reversible isomerization of glucose-6-phosphate to fructose-6-phosphate. This Brucella melitensis biotype 2 (strain ATCC 23457) protein is Glucose-6-phosphate isomerase.